Consider the following 284-residue polypeptide: MQKETSIFLPSQVTVKVHPVVIFNILDHYIRRNVGQDRVIGTLLGFNNDGVLEIRNCFPVVHSETEQIAVEMEYQRKMLDLHLKSSPREPIIGWYATGNDINENSVHINNFYRDEMGNSTPIHLTVDTGLTNDTMGIHAYMAHNLSLNPESSLGSYFSQLPLEILTFEAENAGLESIAQTKYDQQSTSLLSELESLQGSLTKLDEMLESITSYIESVEKGEIQGDPRLGRFLAKTIQALPKANAQVMDKVINNSVKDLLMIVYLSSLTRSQLAVATKISHSLSN.

One can recognise an MPN domain in the interval 15–146 (VKVHPVVIFN…IHAYMAHNLS (132 aa)).

The protein belongs to the eIF-3 subunit F family. In terms of assembly, component of the eukaryotic translation initiation factor 3 (eIF-3) complex.

Its subcellular location is the cytoplasm. In terms of biological role, component of the eukaryotic translation initiation factor 3 (eIF-3) complex, which is involved in protein synthesis of a specialized repertoire of mRNAs and, together with other initiation factors, stimulates binding of mRNA and methionyl-tRNAi to the 40S ribosome. The eIF-3 complex specifically targets and initiates translation of a subset of mRNAs involved in cell proliferation. The chain is Eukaryotic translation initiation factor 3 subunit F (eif3f) from Dictyostelium discoideum (Social amoeba).